A 62-amino-acid polypeptide reads, in one-letter code: Large ribosomal subunit protein bL28 (62 aa).

The interval 1-22 (MAKKCAISGKGPMSGNNVSHAK) is disordered.

Belongs to the bacterial ribosomal protein bL28 family.

The chain is Large ribosomal subunit protein bL28 from Sulfurimonas denitrificans (strain ATCC 33889 / DSM 1251) (Thiomicrospira denitrificans (strain ATCC 33889 / DSM 1251)).